A 120-amino-acid polypeptide reads, in one-letter code: Large ribosomal subunit protein bL20 (120 aa).

It belongs to the bacterial ribosomal protein bL20 family.

Its function is as follows. Binds directly to 23S ribosomal RNA and is necessary for the in vitro assembly process of the 50S ribosomal subunit. It is not involved in the protein synthesizing functions of that subunit. In Desulfitobacterium hafniense (strain DSM 10664 / DCB-2), this protein is Large ribosomal subunit protein bL20.